The chain runs to 141 residues: Hemoglobin subunit alpha (141 aa).

In terms of domain architecture, Globin spans 1–141; that stretch reads VLSSDDKCNV…VSSVLTSKYR (141 aa). O2 is bound at residue His-58. His-87 is a heme b binding site.

Belongs to the globin family. Heterotetramer of two alpha chains and two beta chains. Red blood cells.

In terms of biological role, involved in oxygen transport from the lung to the various peripheral tissues. Has antimicrobial activity against B.subtilis ATCC 6633. Has antioxidant activity. This Crocodylus siamensis (Siamese crocodile) protein is Hemoglobin subunit alpha.